The chain runs to 329 residues: Phospho-N-acetylmuramoyl-pentapeptide-transferase (329 aa).

9 consecutive transmembrane segments (helical) span residues 1–21 (MLLN…IGIP), 53–73 (MGGF…ALVF), 76–96 (FSPA…IGFL), 109–129 (GLTA…SYFI), 141–161 (ILSW…IWLV), 175–195 (GLAS…AVVH), 198–218 (YDVL…FVFN), 237–257 (FLAI…IGAV), and 309–329 (IVFW…YFAF).

It belongs to the glycosyltransferase 4 family. MraY subfamily. It depends on Mg(2+) as a cofactor.

It localises to the cell membrane. It carries out the reaction UDP-N-acetyl-alpha-D-muramoyl-L-alanyl-gamma-D-glutamyl-L-lysyl-D-alanyl-D-alanine + di-trans,octa-cis-undecaprenyl phosphate = Mur2Ac(oyl-L-Ala-gamma-D-Glu-L-Lys-D-Ala-D-Ala)-di-trans,octa-cis-undecaprenyl diphosphate + UMP. Its pathway is cell wall biogenesis; peptidoglycan biosynthesis. Its function is as follows. Catalyzes the initial step of the lipid cycle reactions in the biosynthesis of the cell wall peptidoglycan: transfers peptidoglycan precursor phospho-MurNAc-pentapeptide from UDP-MurNAc-pentapeptide onto the lipid carrier undecaprenyl phosphate, yielding undecaprenyl-pyrophosphoryl-MurNAc-pentapeptide, known as lipid I. The sequence is that of Phospho-N-acetylmuramoyl-pentapeptide-transferase from Lactococcus lactis subsp. cremoris (strain MG1363).